Here is a 229-residue protein sequence, read N- to C-terminus: Cytochrome c oxidase subunit 2 (229 aa).

The Mitochondrial intermembrane portion of the chain corresponds to 1–26; sequence MSTWANLGLQDSASPLMEQLIFFHDH. Residues 27 to 48 traverse the membrane as a helical segment; it reads ALLILVMITVLVGYLMVMLFFN. The Mitochondrial matrix segment spans residues 49 to 62; it reads SYVNRFLLHGQLIE. Residues 63–82 form a helical membrane-spanning segment; sequence MIWTILPAIILLFIAMPSLR. Residues 83–229 lie on the Mitochondrial intermembrane side of the membrane; that stretch reads LLYLLDEINE…IKWISDKVNS (147 aa). 6 residues coordinate Cu cation: His161, Cys196, Glu198, Cys200, His204, and Met207. Glu198 contributes to the Mg(2+) binding site.

This sequence belongs to the cytochrome c oxidase subunit 2 family. Component of the cytochrome c oxidase (complex IV, CIV), a multisubunit enzyme composed of a catalytic core of 3 subunits and several supernumerary subunits. The complex exists as a monomer or a dimer and forms supercomplexes (SCs) in the inner mitochondrial membrane with ubiquinol-cytochrome c oxidoreductase (cytochrome b-c1 complex, complex III, CIII). Cu cation serves as cofactor.

It localises to the mitochondrion inner membrane. The catalysed reaction is 4 Fe(II)-[cytochrome c] + O2 + 8 H(+)(in) = 4 Fe(III)-[cytochrome c] + 2 H2O + 4 H(+)(out). In terms of biological role, component of the cytochrome c oxidase, the last enzyme in the mitochondrial electron transport chain which drives oxidative phosphorylation. The respiratory chain contains 3 multisubunit complexes succinate dehydrogenase (complex II, CII), ubiquinol-cytochrome c oxidoreductase (cytochrome b-c1 complex, complex III, CIII) and cytochrome c oxidase (complex IV, CIV), that cooperate to transfer electrons derived from NADH and succinate to molecular oxygen, creating an electrochemical gradient over the inner membrane that drives transmembrane transport and the ATP synthase. Cytochrome c oxidase is the component of the respiratory chain that catalyzes the reduction of oxygen to water. Electrons originating from reduced cytochrome c in the intermembrane space (IMS) are transferred via the dinuclear copper A center (CU(A)) of subunit 2 and heme A of subunit 1 to the active site in subunit 1, a binuclear center (BNC) formed by heme A3 and copper B (CU(B)). The BNC reduces molecular oxygen to 2 water molecules using 4 electrons from cytochrome c in the IMS and 4 protons from the mitochondrial matrix. This chain is Cytochrome c oxidase subunit 2 (mt:CoII), found in Drosophila subobscura (Fruit fly).